Here is a 307-residue protein sequence, read N- to C-terminus: UDP-3-O-acyl-N-acetylglucosamine deacetylase (307 aa).

Residues His78, His237, and Asp241 each contribute to the Zn(2+) site. His264 acts as the Proton donor in catalysis.

The protein belongs to the LpxC family. It depends on Zn(2+) as a cofactor.

The enzyme catalyses a UDP-3-O-[(3R)-3-hydroxyacyl]-N-acetyl-alpha-D-glucosamine + H2O = a UDP-3-O-[(3R)-3-hydroxyacyl]-alpha-D-glucosamine + acetate. Its pathway is glycolipid biosynthesis; lipid IV(A) biosynthesis; lipid IV(A) from (3R)-3-hydroxytetradecanoyl-[acyl-carrier-protein] and UDP-N-acetyl-alpha-D-glucosamine: step 2/6. In terms of biological role, catalyzes the hydrolysis of UDP-3-O-myristoyl-N-acetylglucosamine to form UDP-3-O-myristoylglucosamine and acetate, the committed step in lipid A biosynthesis. In Azoarcus sp. (strain BH72), this protein is UDP-3-O-acyl-N-acetylglucosamine deacetylase.